The primary structure comprises 82 residues: Colonization factor (82 aa).

Positions 1–33 (MFSSLKNKLNTFKSTLSLGVFLLFSAFANQALA) are cleaved as a signal peptide.

The protein localises to the secreted. The protein is Colonization factor (cep) of Vibrio cholerae serotype O1 (strain ATCC 39315 / El Tor Inaba N16961).